We begin with the raw amino-acid sequence, 449 residues long: Tubulin beta chain (449 aa).

8 residues coordinate GTP: glutamine 11, glutamate 69, serine 138, glycine 142, threonine 143, glycine 144, asparagine 204, and asparagine 226. Residue glutamate 69 coordinates Mg(2+).

It belongs to the tubulin family. As to quaternary structure, dimer of alpha and beta chains. A typical microtubule is a hollow water-filled tube with an outer diameter of 25 nm and an inner diameter of 15 nM. Alpha-beta heterodimers associate head-to-tail to form protofilaments running lengthwise along the microtubule wall with the beta-tubulin subunit facing the microtubule plus end conferring a structural polarity. Microtubules usually have 13 protofilaments but different protofilament numbers can be found in some organisms and specialized cells. Mg(2+) serves as cofactor.

It localises to the cytoplasm. It is found in the cytoskeleton. Its function is as follows. Tubulin is the major constituent of microtubules, a cylinder consisting of laterally associated linear protofilaments composed of alpha- and beta-tubulin heterodimers. Microtubules grow by the addition of GTP-tubulin dimers to the microtubule end, where a stabilizing cap forms. Below the cap, tubulin dimers are in GDP-bound state, owing to GTPase activity of alpha-tubulin. In Candida albicans (Yeast), this protein is Tubulin beta chain (TUB2).